Here is a 212-residue protein sequence, read N- to C-terminus: Cyclin-dependent kinase 2-interacting protein (212 aa).

Met-1 carries the N-acetylmethionine modification. Phosphoserine occurs at positions 69 and 73. A coiled-coil region spans residues 73–107; that stretch reads SKENEEKVCLEYNEELEKLCEELQATLDGLTKIQV. A Na(+)-binding site is contributed by Ser-202.

This sequence belongs to the CINP family. In terms of assembly, homodimer. Part of the 55LCC heterohexameric ATPase complex composed at least of AIRIM, AFG2A, AFG2B and CINP. Interacts with AIRIM. Interacts with CDK2 and CDC7. Interacts with the components of the replication complex, MCM2, MCM3, MCM4, MCM5, MCM6, MCM7 and with ORC2-containing complexes. Interacts with ATRIP. Interacts with CEP152. Associates with pre-60S ribosomal particles. Post-translationally, phosphorylated by CDC7 but not by CDK2.

It is found in the nucleus. Its function is as follows. Component of the DNA replication complex, which interacts with two kinases, CDK2 and CDC7, thereby providing a functional and physical link between CDK2 and CDC7 during firing of the origins of replication. Regulates ATR-mediated checkpoint signaling in response to DNA damage. Part of the 55LCC heterohexameric ATPase complex which is chromatin-associated and promotes replisome proteostasis to maintain replication fork progression and genome stability. Required for replication fork progression, sister chromatid cohesion, and chromosome stability. The ATPase activity is specifically enhanced by replication fork DNA and is coupled to cysteine protease-dependent cleavage of replisome substrates in response to replication fork damage. Uses ATPase activity to process replisome substrates in S-phase, facilitating their proteolytic turnover from chromatin to ensure DNA replication and mitotic fidelity. As part of 55LCC complex, also involved in the cytoplasmic maturation steps of pre-60S ribosomal particles by promoting the release of shuttling protein RSL24D1/RLP24 from the pre-ribosomal particles. The chain is Cyclin-dependent kinase 2-interacting protein from Homo sapiens (Human).